The chain runs to 36 residues: MSDINATRLPGAYPPVPMPCVGDADNFTLTRGENLC.

A propeptide spanning residues 1-10 is cleaved from the precursor; that stretch reads MSDINATRLP. Residues 11–19 constitute a cross-link (cyclopeptide (Gly-Pro)); it reads GAYPPVPMP. A propeptide spanning residues 20–36 is cleaved from the precursor; it reads CVGDADNFTLTRGENLC.

Belongs to the MSDIN fungal toxin family. Post-translationally, processed by the macrocyclase-peptidase enzyme POPB to yield a toxic cyclic nonapeptide. POPB first removes 10 residues from the N-terminus. Conformational trapping of the remaining peptide forces the enzyme to release this intermediate rather than proceed to macrocyclization. The enzyme rebinds the remaining peptide in a different conformation and catalyzes macrocyclization of the N-terminal 9 residues.

In terms of biological role, probable toxin that belongs to the MSDIN-like toxin family responsible for a large number of food poisoning cases and deaths. In Amanita bisporigera (Destroying angel), this protein is MSDIN-like toxin proprotein 10.